We begin with the raw amino-acid sequence, 1274 residues long: Clustered mitochondria protein homolog (1274 aa).

Positions 1–53 (MAQTNGELEHSKGMSSPAVRISQAQKSTKLTVDPESPEQVANGTHAEGEQPEE) are disordered. 3 TPR repeats span residues 293–326 (SPSFNSSFEALQEANNQKDLLTTFPFQNAIPNNP), 510–543 (DYGGVEGKDVVATHPDFVPVFEKLSKALRIKKHP), and 628–661 (AKEAAKKEQSETAEPKEEGAEEKSEEALDQERVD). Residues 342 to 586 (DITRSQENYL…RVTPLDVMWQ (245 aa)) form the Clu domain. Disordered stretches follow at residues 631–655 (AAKKEQSETAEPKEEGAEEKSEEAL) and 893–925 (VSNGVNGAGHDDSNSNKKKKKKGGDSNSPARAA). 4 TPR repeats span residues 998–1031 (AKLYHQLSMLYYQTDEKEAAVELARKAVIVTERT), 1040–1073 (ILSYLNLSLFEHASGNTKTALVYIKHAMDLWKII), 1082–1115 (ITTMNNAAVMLQHLKQYSDSRKWFEASLVVCESL), and 1124–1157 (ATILFQLAQALALDQDSKGAVGKMRDAYNIFLQQ). The interval 1197–1274 (INMTPRTLGT…KLRGSKKSSA (78 aa)) is disordered. The span at 1200-1217 (TPRTLGTRVQPQVGQTAP) shows a compositional bias: polar residues.

Belongs to the CLU family. In terms of assembly, may associate with the eukaryotic translation initiation factor 3 (eIF-3) complex.

It localises to the cytoplasm. In terms of biological role, mRNA-binding protein involved in proper cytoplasmic distribution of mitochondria. This Aspergillus terreus (strain NIH 2624 / FGSC A1156) protein is Clustered mitochondria protein homolog.